We begin with the raw amino-acid sequence, 435 residues long: Deoxybrevianamide E synthase (435 aa).

Residues 1–28 are disordered; sequence MTAPELRAPAGHPQEPPARSSPAQALSS. Residue E96 participates in brevianamide F binding. R110, K195, Y197, K265, Y267, Y354, Y419, and Y423 together coordinate dimethylallyl diphosphate.

Belongs to the tryptophan dimethylallyltransferase family. Monomer.

The catalysed reaction is brevianamide F + dimethylallyl diphosphate = deoxybrevianamide E + diphosphate. It participates in alkaloid biosynthesis. Deoxybrevianamide E synthase; part of the gene cluster that mediates the biosynthesis of notoamide, a fungal indole alkaloid that belongs to a family of natural products containing a characteristic bicyclo[2.2.2]diazaoctane core. The first step of notoamide biosynthesis involves coupling of L-proline and L-tryptophan by the bimodular NRPS notE', to produce cyclo-L-tryptophan-L-proline called brevianamide F. The reverse prenyltransferase notF' then acts as a deoxybrevianamide E synthase and converts brevianamide F to deoxybrevianamide E via reverse prenylation at C-2 of the indole ring leading to the bicyclo[2.2.2]diazaoctane core. Deoxybrevianamide E is further hydroxylated at C-6 of the indole ring, likely catalyzed by the cytochrome P450 monooxygenase notG', to yield 6-hydroxy-deoxybrevianamide E. 6-hydroxy-deoxybrevianamide E is a specific substrate of the prenyltransferase notC' for normal prenylation at C-7 to produce 6-hydroxy-7-prenyl-deoxybrevianamide, also called notoamide S. As the proposed pivotal branching point in notoamide biosynthesis, notoamide S can be diverted to notoamide E through an oxidative pyran ring closure putatively catalyzed by either notH' cytochrome P450 monooxygenase or the notD' FAD-linked oxidoreductase. This step would be followed by an indole 2,3-epoxidation-initiated pinacol-like rearrangement catalyzed by the notB' FAD-dependent monooxygenase leading to the formation of notoamide C and notoamide D. On the other hand notoamide S is converted to notoamide T by notH' (or notD'), a bifunctional oxidase that also functions as the intramolecular Diels-Alderase responsible for generation of (-)-notoamide T. To generate antipodal (+)-notoaminide T, notH (or notD) in Aspergillus strain MF297-2 is expected to catalyze a Diels-Alder reaction leading to the opposite stereochemistry. The remaining oxidoreductase notD' (or notH') likely catalyzes the oxidative pyran ring formation to yield (-)-stephacidin A. The FAD-dependent monooxygenase notI' is highly similar to notB' and is predicted to catalyze a similar conversion from (-)-stephacidin A to (+)-notoamide B via the 2,3-epoxidation of (-)-stephacidin A followed by a pinacol-type rearrangement. Finally, it remains unclear which enzyme could be responsible for the final hydroxylation steps leading to notoamide A and sclerotiamide. This chain is Deoxybrevianamide E synthase, found in Aspergillus versicolor.